We begin with the raw amino-acid sequence, 506 residues long: Anaerobic nitric oxide reductase transcription regulator NorR (506 aa).

Asp57 is subject to 4-aspartylphosphate. One can recognise a Sigma-54 factor interaction domain in the interval 187–416; the sequence is MIGLSPAMTQ…LEHAIHRAVV (230 aa). ATP contacts are provided by residues 215 to 222 and 278 to 287; these read GETGTGKE and ADNGTLFLDE. Positions 481–500 form a DNA-binding region, H-T-H motif; sequence WAASARALETDVANLHRLAK.

Its pathway is nitrogen metabolism; nitric oxide reduction. Its function is as follows. Required for the expression of anaerobic nitric oxide (NO) reductase, acts as a transcriptional activator for at least the norVW operon. Activation also requires sigma-54. This chain is Anaerobic nitric oxide reductase transcription regulator NorR, found in Salmonella schwarzengrund (strain CVM19633).